The primary structure comprises 196 residues: Pyridoxal 5'-phosphate synthase subunit PdxT (196 aa).

47-49 (GES) contacts L-glutamine. Cys-79 acts as the Nucleophile in catalysis. Residues Arg-106 and 134–135 (IR) each bind L-glutamine. Active-site charge relay system residues include His-170 and Glu-172.

Belongs to the glutaminase PdxT/SNO family. As to quaternary structure, in the presence of PdxS, forms a dodecamer of heterodimers. Only shows activity in the heterodimer.

The catalysed reaction is aldehydo-D-ribose 5-phosphate + D-glyceraldehyde 3-phosphate + L-glutamine = pyridoxal 5'-phosphate + L-glutamate + phosphate + 3 H2O + H(+). It catalyses the reaction L-glutamine + H2O = L-glutamate + NH4(+). The protein operates within cofactor biosynthesis; pyridoxal 5'-phosphate biosynthesis. Functionally, catalyzes the hydrolysis of glutamine to glutamate and ammonia as part of the biosynthesis of pyridoxal 5'-phosphate. The resulting ammonia molecule is channeled to the active site of PdxS. The sequence is that of Pyridoxal 5'-phosphate synthase subunit PdxT from Bacillus pumilus (strain SAFR-032).